Reading from the N-terminus, the 137-residue chain is Large ribosomal subunit protein uL16 (137 aa).

Belongs to the universal ribosomal protein uL16 family. Part of the 50S ribosomal subunit.

Functionally, binds 23S rRNA and is also seen to make contacts with the A and possibly P site tRNAs. The sequence is that of Large ribosomal subunit protein uL16 from Lawsonia intracellularis (strain PHE/MN1-00).